An 85-amino-acid polypeptide reads, in one-letter code: Large ribosomal subunit protein bL27 (85 aa).

Residues 1–10 (MAQKKGGGST) are compositionally biased toward gly residues. Positions 1 to 21 (MAQKKGGGSTRNGRDSQPKML) are disordered.

Belongs to the bacterial ribosomal protein bL27 family.

This is Large ribosomal subunit protein bL27 from Polaromonas naphthalenivorans (strain CJ2).